The sequence spans 173 residues: Ribosome maturation factor RimM (173 aa).

The PRC barrel domain occupies 95 to 169 (EGSYYFKDIL…RIEVTLLEGL (75 aa)).

Belongs to the RimM family. In terms of assembly, binds ribosomal protein uS19.

Its subcellular location is the cytoplasm. Functionally, an accessory protein needed during the final step in the assembly of 30S ribosomal subunit, possibly for assembly of the head region. Essential for efficient processing of 16S rRNA. May be needed both before and after RbfA during the maturation of 16S rRNA. It has affinity for free ribosomal 30S subunits but not for 70S ribosomes. In Lactobacillus johnsonii (strain CNCM I-12250 / La1 / NCC 533), this protein is Ribosome maturation factor RimM.